Here is a 159-residue protein sequence, read N- to C-terminus: Globin D, coelomic (159 aa).

The residue at position 2 (glycine 2) is an N-acetylglycine. The Globin domain maps to 12-158 (DLTPAEKDLI…VQGVLITKHA (147 aa)). Residues histidine 74 and histidine 105 each coordinate heme b.

This sequence belongs to the globin family. As to quaternary structure, homodimer.

This chain is Globin D, coelomic, found in Molpadia arenicola (Sea cucumber).